Consider the following 531-residue polypeptide: Transactivator/viroplasmin protein (531 aa).

2 disordered regions span residues 80-101 (ASGK…TATG) and 505-531 (CKSE…SVLV). Polar residues-rich tracts occupy residues 91 to 100 (SATSPEQTAT) and 505 to 517 (CKSE…TSEE). The span at 518 to 531 (GLQESEDEDFSVLV) shows a compositional bias: acidic residues.

This sequence belongs to the caulimoviridae viroplasmin family.

The protein localises to the host cytoplasm. Its function is as follows. Enhances the translation of downstream ORFs on polycistronic mRNAs. This Cestrum yellow leaf curling virus (CmYLCV) protein is Transactivator/viroplasmin protein.